A 5125-amino-acid chain; its full sequence is Usherin (5125 aa).

An N-terminal signal peptide occupies residues 1-33 (MYYLALSSGFLGQAIKTSILAYLASVLLAASQG). Residues Asn120, Asn229, Asn257, Asn273, Asn414, Asn447, and Asn468 are each glycosylated (N-linked (GlcNAc...) asparagine). A Laminin N-terminal domain is found at 273 to 513 (NVSLTNREIL…AVDEITIIGR (241 aa)). Cystine bridges form between Cys514-Cys523, Cys516-Cys532, Cys534-Cys545, Cys548-Cys568, Cys571-Cys580, Cys573-Cys601, Cys604-Cys613, Cys616-Cys634, Cys637-Cys651, Cys639-Cys658, Cys660-Cys669, Cys672-Cys687, Cys690-Cys704, Cys692-Cys711, Cys713-Cys722, Cys725-Cys740, Cys743-Cys755, Cys745-Cys762, Cys764-Cys773, Cys776-Cys788, Cys791-Cys804, Cys793-Cys811, Cys813-Cys822, Cys825-Cys840, Cys843-Cys857, Cys845-Cys864, Cys866-Cys875, Cys878-Cys893, Cys896-Cys909, Cys898-Cys916, Cys918-Cys927, Cys930-Cys944, Cys947-Cys959, Cys949-Cys966, Cys981-Cys995, Cys998-Cys1010, Cys1000-Cys1017, Cys1019-Cys1028, and Cys1031-Cys1046. Laminin EGF-like domains lie at 514-570 (CQCH…NCKP), 571-636 (CQCH…VCKH), 637-689 (CDCN…CCRP), 690-742 (CDCN…GCEP), 743-790 (CHCN…ACEV), 791-842 (CDCN…LCLP), 843-895 (CNCE…GCQA), 896-946 (CDCD…GCLP), 947-997 (CLCH…RCRP), and 998-1048 (CHCH…ACSK). Residue Asn646 is glycosylated (N-linked (GlcNAc...) asparagine). N-linked (GlcNAc...) asparagine glycosylation is found at Asn835 and Asn852. An N-linked (GlcNAc...) asparagine glycan is attached at Asn884. The N-linked (GlcNAc...) asparagine glycan is linked to Asn940. N-linked (GlcNAc...) asparagine glycosylation occurs at Asn1007. 4 consecutive Fibronectin type-III domains span residues 1054–1142 (PPPR…TKPE), 1146–1240 (GHLN…APPQ), 1241–1356 (RQEP…SAPV), and 1357–1461 (FMAA…AAPA). Residues Asn1067, Asn1149, Asn1170, Asn1221, Asn1304, and Asn1381 are each glycosylated (N-linked (GlcNAc...) asparagine). 2 consecutive Laminin G-like domains span residues 1510–1697 (TKGT…WEGC) and 1702–1879 (EEGV…QDGC). Disulfide bonds link Cys1660-Cys1697 and Cys1850-Cys1879. 29 consecutive Fibronectin type-III domains span residues 1857–1943 (TRGA…SAPH), 1945–2042 (VPTP…TPQE), 2043–2132 (APQE…LPPE), 2133–2230 (RVDP…TVPE), 2231–2318 (GVPA…APPE), 2319–2421 (GTVN…MPPG), 2425–2519 (GLLS…TTED), 2520–2613 (KPGP…TPEG), 2614–2709 (IPGP…TRPS), 2713–2806 (GVQP…THPA), 2807–2910 (LPQE…TLAG), 2914–3005 (RGAT…TWEE), 3009–3099 (GMRP…TPSG), 3380–3485 (ATEE…TRED), 3486–3577 (VPQG…TRGV), 3580–3670 (SVPP…AAPQ), 3672–3762 (VWVT…TPED), 3765–3852 (PPCN…TLEA), 3853–3950 (APVG…TLEA), 3951–4054 (PPQD…SAPS), 4055–4143 (GLMN…APPD), 4144–4251 (SQMA…APPD), 4252–4344 (GLSP…ASPA), 4345–4432 (GVSP…APPE), 4433–4517 (DMDP…TSPS), 4518–4620 (APSG…IPPL), 4625–4720 (PHLE…TGPA), 4721–4813 (PPEG…THPA), and 4814–4916 (PPSG…TKKE). Positions 1930–1950 (SDWSRGRTLGSAPHSVPTPSR) are disordered.

As to quaternary structure, interacts with collagen IV and fibronectin via its laminin EGF-like domains. Interaction with collagen may be required for stable integration into the basement membrane. Interacts with NINL. Interacts with USH1C. Interacts (via the cytoplasmic region) with PDZD7. Component of USH2 complex, composed of ADGRV1, PDZD7, USH2A and WHRN. Interacts with ADGRV1/MASS1 (via N-terminal PDZ domain). Interacts (via the cytoplasmic region) with WHRN. Interacts (via the cytoplasmic region) with VEZT and MYO7A (via MyTH4-FERM domains); the interaction associates VEZT with the USH2 complex at the stereocilia base. As to expression, present in the synaptic terminals of inner ear hair cells (at protein level). Predominantly expressed in the retina and cochlea. Weakly expressed in brain and kidney. Detectable from E17 in the neural epithelium, but not in the retinal pigment epithelium (RPE) of the developing retina. After birth, it is expressed at P7 and remains expressed during adulthood.

Its subcellular location is the secreted. The protein resides in the cell projection. The protein localises to the stereocilium membrane. It localises to the photoreceptor inner segment. Its function is as follows. Involved in hearing and vision as member of the USH2 complex. In the inner ear, required for the hair bundle ankle formation, which connects growing stereocilia in developing cochlear hair cells. In retina photoreceptors, the USH2 complex is required for the maintenance of periciliary membrane complex that seems to play a role in regulating intracellular protein transport. This chain is Usherin (Ush2a), found in Rattus norvegicus (Rat).